Reading from the N-terminus, the 643-residue chain is SURP and G-patch domain-containing protein 1 (643 aa).

Disordered stretches follow at residues 48-69 (ARMEQKARQSHVPSPQPPHPGE) and 97-119 (KAQTSTDSAPRAPPSMPTPSSLK). The residue at position 128 (Thr128) is a Phosphothreonine. One copy of the SURP motif 1 repeat lies at 187 to 229 (VIEKLARFVAEGGPELEKVAMEDYKDNPAFTFLHDKNSREFLY). Ser252 carries the phosphoserine modification. The SURP motif 2 repeat unit spans residues 262–305 (LAEKLARFIADGGPEVETIALQNNRENQAFSFLYDPNSQGYRYY). Disordered regions lie at residues 316–335 (KAGSTGSFPAPAPNPSLRRK) and 360–393 (AVNPTPSIPGKPTATAAVKRKRKSRWGPEEDKVE). The residue at position 322 (Ser322) is a Phosphoserine. A Nuclear localization signal motif is present at residues 378 to 384 (KRKRKSR). Residues Ser407, Ser409, Ser412, and Ser483 each carry the phosphoserine modification. Residues 560–607 (VENIGYQMLMKMGWKEGEGLGTEGQGIKNPVNKGATTIDGAGFGIDRP) enclose the G-patch domain.

In terms of assembly, component of the spliceosome.

It localises to the nucleus. Its function is as follows. Plays a role in pre-mRNA splicing. This Mus musculus (Mouse) protein is SURP and G-patch domain-containing protein 1 (Sugp1).